We begin with the raw amino-acid sequence, 372 residues long: UDP-N-acetylenolpyruvoylglucosamine reductase (372 aa).

One can recognise an FAD-binding PCMH-type domain in the interval 29–205 (VGPTARRLIT…LEVEFALDAS (177 aa)). Arginine 177 is a catalytic residue. Serine 260 serves as the catalytic Proton donor. Glutamate 364 is an active-site residue.

The protein belongs to the MurB family. It depends on FAD as a cofactor.

It localises to the cytoplasm. It carries out the reaction UDP-N-acetyl-alpha-D-muramate + NADP(+) = UDP-N-acetyl-3-O-(1-carboxyvinyl)-alpha-D-glucosamine + NADPH + H(+). Its pathway is cell wall biogenesis; peptidoglycan biosynthesis. Its function is as follows. Cell wall formation. This chain is UDP-N-acetylenolpyruvoylglucosamine reductase, found in Mycobacterium avium (strain 104).